We begin with the raw amino-acid sequence, 141 residues long: Protein Turandot Z (141 aa).

Positions 1–23 (MYFAIRLSFVLAVLFCLTGNGNA) are cleaved as a signal peptide.

It belongs to the Turandot family.

It localises to the secreted. In terms of biological role, a humoral factor that may play a role in stress tolerance. This is Protein Turandot Z from Drosophila yakuba (Fruit fly).